The primary structure comprises 450 residues: Bifunctional protein GlmU (450 aa).

Residues 1 to 228 (MSTALVILAA…EAQTLGVNSR (228 aa)) are pyrophosphorylase. Residues 8-11 (LAAG), K22, Q75, 80-81 (GT), 103-105 (YGD), G140, E154, N169, and N226 contribute to the UDP-N-acetyl-alpha-D-glucosamine site. D105 contributes to the Mg(2+) binding site. N226 is a binding site for Mg(2+). Residues 229–249 (ADLAAADAIFQTRARAELLDL) form a linker region. The segment at 250-450 (GVTLMAPETV…AKKASKQKET (201 aa)) is N-acetyltransferase. The UDP-N-acetyl-alpha-D-glucosamine site is built by R315 and K333. The active-site Proton acceptor is the H345. Residues Y348 and N359 each coordinate UDP-N-acetyl-alpha-D-glucosamine. Acetyl-CoA contacts are provided by residues A362, 368 to 369 (NY), S387, T405, and R422.

This sequence in the N-terminal section; belongs to the N-acetylglucosamine-1-phosphate uridyltransferase family. The protein in the C-terminal section; belongs to the transferase hexapeptide repeat family. Homotrimer. Requires Mg(2+) as cofactor.

Its subcellular location is the cytoplasm. The enzyme catalyses alpha-D-glucosamine 1-phosphate + acetyl-CoA = N-acetyl-alpha-D-glucosamine 1-phosphate + CoA + H(+). It carries out the reaction N-acetyl-alpha-D-glucosamine 1-phosphate + UTP + H(+) = UDP-N-acetyl-alpha-D-glucosamine + diphosphate. It participates in nucleotide-sugar biosynthesis; UDP-N-acetyl-alpha-D-glucosamine biosynthesis; N-acetyl-alpha-D-glucosamine 1-phosphate from alpha-D-glucosamine 6-phosphate (route II): step 2/2. The protein operates within nucleotide-sugar biosynthesis; UDP-N-acetyl-alpha-D-glucosamine biosynthesis; UDP-N-acetyl-alpha-D-glucosamine from N-acetyl-alpha-D-glucosamine 1-phosphate: step 1/1. It functions in the pathway bacterial outer membrane biogenesis; LPS lipid A biosynthesis. Functionally, catalyzes the last two sequential reactions in the de novo biosynthetic pathway for UDP-N-acetylglucosamine (UDP-GlcNAc). The C-terminal domain catalyzes the transfer of acetyl group from acetyl coenzyme A to glucosamine-1-phosphate (GlcN-1-P) to produce N-acetylglucosamine-1-phosphate (GlcNAc-1-P), which is converted into UDP-GlcNAc by the transfer of uridine 5-monophosphate (from uridine 5-triphosphate), a reaction catalyzed by the N-terminal domain. The chain is Bifunctional protein GlmU from Ruegeria pomeroyi (strain ATCC 700808 / DSM 15171 / DSS-3) (Silicibacter pomeroyi).